A 59-amino-acid polypeptide reads, in one-letter code: Cecropin-C type 1 (59 aa).

The signal sequence occupies residues 1–23 (MNFTKIFVLIAMAALLLVGQSEA).

The protein localises to the secreted. Cecropins have lytic and antibacterial activity against several Gram-positive and Gram-negative bacteria. The protein is Cecropin-C type 1 (CECC1) of Aedes albopictus (Asian tiger mosquito).